A 233-amino-acid chain; its full sequence is Ribitol-5-phosphate cytidylyltransferase (233 aa).

CTP contacts are provided by residues 7–10 (LAGG) and 80–86 (GADRNET).

The protein belongs to the IspD/TarI cytidylyltransferase family. TarI subfamily.

The enzyme catalyses D-ribitol 5-phosphate + CTP + H(+) = CDP-L-ribitol + diphosphate. Its pathway is cell wall biogenesis; poly(ribitol phosphate) teichoic acid biosynthesis. Its function is as follows. Catalyzes the transfer of the cytidylyl group of CTP to D-ribitol 5-phosphate. This chain is Ribitol-5-phosphate cytidylyltransferase, found in Lactiplantibacillus plantarum (strain ATCC BAA-793 / NCIMB 8826 / WCFS1) (Lactobacillus plantarum).